Reading from the N-terminus, the 434-residue chain is F-box/FBD/LRR-repeat protein At3g26920 (434 aa).

In terms of domain architecture, F-box spans Glu-16–Phe-65. LRR repeat units follow at residues Leu-69 to Met-95, Asp-100 to Val-125, Thr-145 to Glu-172, Val-173 to Gln-198, Val-219 to Gly-244, Ile-265 to Val-290, and Thr-315 to Asp-341. One can recognise an FBD domain in the interval Lys-353–Ser-403.

This Arabidopsis thaliana (Mouse-ear cress) protein is F-box/FBD/LRR-repeat protein At3g26920.